The primary structure comprises 259 residues: ATP synthase subunit a (259 aa).

The next 5 helical transmembrane spans lie at Thr29–Phe49, Leu89–Leu109, Ser132–Ile154, Ile209–Trp229, and Ala230–Val250.

The protein belongs to the ATPase A chain family. As to quaternary structure, F-type ATPases have 2 components, CF(1) - the catalytic core - and CF(0) - the membrane proton channel. CF(1) has five subunits: alpha(3), beta(3), gamma(1), delta(1), epsilon(1). CF(0) has three main subunits: a(1), b(2) and c(9-12). The alpha and beta chains form an alternating ring which encloses part of the gamma chain. CF(1) is attached to CF(0) by a central stalk formed by the gamma and epsilon chains, while a peripheral stalk is formed by the delta and b chains.

It is found in the cell inner membrane. Functionally, key component of the proton channel; it plays a direct role in the translocation of protons across the membrane. In Tolumonas auensis (strain DSM 9187 / NBRC 110442 / TA 4), this protein is ATP synthase subunit a.